A 397-amino-acid chain; its full sequence is Imidazolonepropionase (397 aa).

2 residues coordinate Fe(3+): H66 and H68. Zn(2+)-binding residues include H66 and H68. Residues R75, Y138, and H171 each contribute to the 4-imidazolone-5-propanoate site. An N-formimidoyl-L-glutamate-binding site is contributed by Y138. A Fe(3+)-binding site is contributed by H236. H236 contributes to the Zn(2+) binding site. A 4-imidazolone-5-propanoate-binding site is contributed by Q239. D311 contributes to the Fe(3+) binding site. D311 is a Zn(2+) binding site. N-formimidoyl-L-glutamate-binding residues include N313 and G315. S316 lines the 4-imidazolone-5-propanoate pocket.

It belongs to the metallo-dependent hydrolases superfamily. HutI family. Zn(2+) serves as cofactor. Fe(3+) is required as a cofactor.

The protein localises to the cytoplasm. It carries out the reaction 4-imidazolone-5-propanoate + H2O = N-formimidoyl-L-glutamate. The protein operates within amino-acid degradation; L-histidine degradation into L-glutamate; N-formimidoyl-L-glutamate from L-histidine: step 3/3. Functionally, catalyzes the hydrolytic cleavage of the carbon-nitrogen bond in imidazolone-5-propanoate to yield N-formimidoyl-L-glutamate. It is the third step in the universal histidine degradation pathway. The protein is Imidazolonepropionase of Roseobacter denitrificans (strain ATCC 33942 / OCh 114) (Erythrobacter sp. (strain OCh 114)).